The primary structure comprises 196 residues: Nucleoid occlusion factor SlmA (196 aa).

The HTH tetR-type domain occupies 7–68 (PNRRDEILQA…GLIEFIEESI (62 aa)). The H-T-H motif DNA-binding region spans 31–50 (TTAKLAKQVGVSEAALYRHF). A coiled-coil region spans residues 71–93 (RVNRILEDEKDTLKRIELLLKLL).

This sequence belongs to the nucleoid occlusion factor SlmA family. Homodimer. Interacts with FtsZ.

The protein resides in the cytoplasm. It localises to the nucleoid. Required for nucleoid occlusion (NO) phenomenon, which prevents Z-ring formation and cell division over the nucleoid. Acts as a DNA-associated cell division inhibitor that binds simultaneously chromosomal DNA and FtsZ, and disrupts the assembly of FtsZ polymers. SlmA-DNA-binding sequences (SBS) are dispersed on non-Ter regions of the chromosome, preventing FtsZ polymerization at these regions. This chain is Nucleoid occlusion factor SlmA, found in Aliivibrio fischeri (strain MJ11) (Vibrio fischeri).